We begin with the raw amino-acid sequence, 297 residues long: 33 kDa chaperonin (297 aa).

2 disulfide bridges follow: Cys232/Cys234 and Cys266/Cys269.

The protein belongs to the HSP33 family. Post-translationally, under oxidizing conditions two disulfide bonds are formed involving the reactive cysteines. Under reducing conditions zinc is bound to the reactive cysteines and the protein is inactive.

It is found in the cytoplasm. Its function is as follows. Redox regulated molecular chaperone. Protects both thermally unfolding and oxidatively damaged proteins from irreversible aggregation. Plays an important role in the bacterial defense system toward oxidative stress. The chain is 33 kDa chaperonin from Azotobacter vinelandii (strain DJ / ATCC BAA-1303).